Here is a 226-residue protein sequence, read N- to C-terminus: Charged multivesicular body protein 5 (226 aa).

The stretch at 21–93 (IAGVDARATN…NQSFNMEQAN (73 aa)) forms a coiled coil. Residues 188 to 198 (KAPEAPSREPG) are compositionally biased toward basic and acidic residues. The tract at residues 188 to 226 (KAPEAPSREPGADSIVPGKSTIETDEFGLPKIPTSLKTT) is disordered. Ser201 is subject to Phosphoserine. Thr226 bears the Phosphothreonine mark.

It belongs to the SNF7 family. As to quaternary structure, probable peripherally associated component of the endosomal sorting required for transport complex III (ESCRT-III).

The protein resides in the endosome membrane. In terms of biological role, probable peripherally associated component of the endosomal sorting required for transport complex III (ESCRT-III) which is involved in multivesicular bodies (MVBs) formation and sorting of endosomal cargo proteins into MVBs. MVBs contain intraluminal vesicles (ILVs) that are generated by invagination and scission from the limiting membrane of the endosome and are delivered to lysosomes enabling degradation of membrane proteins. Specifically down-regulates Notch signaling activity in the germarium, probably by facilitating Notch endocytosis. In Drosophila melanogaster (Fruit fly), this protein is Charged multivesicular body protein 5.